Here is a 159-residue protein sequence, read N- to C-terminus: Ribosomal RNA large subunit methyltransferase H (159 aa).

Residues leucine 76, glycine 108, and 127 to 132 (FGRLTL) contribute to the S-adenosyl-L-methionine site.

This sequence belongs to the RNA methyltransferase RlmH family. Homodimer.

Its subcellular location is the cytoplasm. The enzyme catalyses pseudouridine(1915) in 23S rRNA + S-adenosyl-L-methionine = N(3)-methylpseudouridine(1915) in 23S rRNA + S-adenosyl-L-homocysteine + H(+). In terms of biological role, specifically methylates the pseudouridine at position 1915 (m3Psi1915) in 23S rRNA. This chain is Ribosomal RNA large subunit methyltransferase H, found in Listeria welshimeri serovar 6b (strain ATCC 35897 / DSM 20650 / CCUG 15529 / CIP 8149 / NCTC 11857 / SLCC 5334 / V8).